The chain runs to 460 residues: MEKVIPVKKNNDYEIYIDDFGNMGEGIGKIDNFTVFVKDAVKGEKVRAKIIKVNKSFAIGKLIDIIEKSQDRTEPVCSIYKKCGGCQLQHLKYTEQLEFKKNKVVECLKRIGKLDLSSVRINETIGMEDPYFYRNKVQLPVGETAGEAKIGFYRERSHEIIEVDKCFIQDDSANEIILLIKRWIKEFNIEGYNEYSGKGTLRHIMIRKAFKTGQIMLVLVTNTENVPHKKELIHMITTEIQGIKGIIQNINNKKTNVILGQREITLWGESTIEDYIGEFKFNISSKSFFQVNPIQTEKLYSAALKYAGLTGKEVVFDAYCGTGTISLFLSQNAKKVYGVEIIPEAIENAKINAKQNGIENTEFIVGKSEEEIPKLIEKGIAPEVVVVDPPRKGCEKSLLHSIAEASPKTIVYVSCDPATLSRDLGILSELGYEVNEVQPVDMFPMTGHVETIVLIKRVDK.

One can recognise a TRAM domain in the interval 6-64 (PVKKNNDYEIYIDDFGNMGEGIGKIDNFTVFVKDAVKGEKVRAKIIKVNKSFAIGKLID). [4Fe-4S] cluster is bound by residues C77, C83, C86, and C166. Residues Q290, Y319, E340, and D388 each contribute to the S-adenosyl-L-methionine site. C415 acts as the Nucleophile in catalysis.

This sequence belongs to the class I-like SAM-binding methyltransferase superfamily. RNA M5U methyltransferase family.

This is an uncharacterized protein from Clostridium acetobutylicum (strain ATCC 824 / DSM 792 / JCM 1419 / IAM 19013 / LMG 5710 / NBRC 13948 / NRRL B-527 / VKM B-1787 / 2291 / W).